The chain runs to 278 residues: Envelope glycoprotein L (278 aa).

The N-terminal stretch at 1–32 is a signal peptide; the sequence is MCRRPDCGFSFSPGPVILLWCCLLLSIVSSAA. One can recognise a gL betaherpesvirus-type domain in the interval 43–256; it reads VPAECPELTR…DKYYAGLPPE (214 aa). A disulfide bond links Cys-154 and Cys-159.

Belongs to the herpesviridae glycoprotein L (gL) family. Betaherpesvirinae gL subfamily. In terms of assembly, interacts with glycoprotein H (gH); this interaction is necessary for the correct processing and cell surface expression of gH. Forms the envelope pentamer complex (PC) composed of gH, gL, UL128, UL130, and UL131A. The pentamer interacts with host NRP2. Forms the envelope trimer complex composed of gH, gL, and gO. The trimer interacts with host PDGFRA. The trimer also interacts with host EPHA2.

Its subcellular location is the virion membrane. The protein resides in the host cell membrane. The protein localises to the host Golgi apparatus. It localises to the host trans-Golgi network. The heterodimer glycoprotein H-glycoprotein L is required for the fusion of viral and plasma membranes leading to virus entry into the host cell. Acts as a functional inhibitor of gH and maintains gH in an inhibited form. Upon binding to host integrins, gL dissociates from gH leading to activation of the viral fusion glycoproteins gB and gH. In human cytomegalovirus, forms two distincts complexes to mediate viral entry, a trimer and a pentamer at the surface of the virion envelope. The gH-gL-gO trimer is required for infection in fibroblasts by interacting with host PDGFRA, and in glioblastoma cells by interacting with host EPHA2. The gH-gL-UL128-UL130-UL131A pentamer is essential for viral entry in epithelial, endothelial and myeloid cells via interaction with host NRP2. The chain is Envelope glycoprotein L from Human cytomegalovirus (strain 119) (HHV-5).